Consider the following 335-residue polypeptide: GTPase Obg (335 aa).

Residues 1-159 (MKFVDSASIR…REIGLELSIM (159 aa)) enclose the Obg domain. One can recognise an OBG-type G domain in the interval 160-332 (ADIGLLGMPN…LVAGLFKLVK (173 aa)). Residues 166–173 (GMPNAGKS), 191–195 (FTTLH), 212–215 (DIPG), 282–285 (NKMD), and 313–315 (SAL) contribute to the GTP site. 2 residues coordinate Mg(2+): S173 and T193.

The protein belongs to the TRAFAC class OBG-HflX-like GTPase superfamily. OBG GTPase family. In terms of assembly, monomer. Mg(2+) is required as a cofactor.

The protein localises to the cytoplasm. Functionally, an essential GTPase which binds GTP, GDP and possibly (p)ppGpp with moderate affinity, with high nucleotide exchange rates and a fairly low GTP hydrolysis rate. Plays a role in control of the cell cycle, stress response, ribosome biogenesis and in those bacteria that undergo differentiation, in morphogenesis control. In Ruthia magnifica subsp. Calyptogena magnifica, this protein is GTPase Obg.